The primary structure comprises 350 residues: Glycolate oxidase subunit GlcE (350 aa).

Residues 1–173 enclose the FAD-binding PCMH-type domain; sequence MLRECDYSQA…TEISMKVLPR (173 aa).

The glycolate oxidase likely consists of three subunits, GlcD, GlcE and GlcF. Requires FAD as cofactor.

It localises to the cell inner membrane. The enzyme catalyses glycolate + A = glyoxylate + AH2. It carries out the reaction (R)-lactate + A = pyruvate + AH2. Its activity is regulated as follows. In vitro the glycolate oxidase activity is inhibited by the sulfhydryl inhibitors CuSO4 and PCMB, by KCN, but not by the metal complexing agent EDTA. Functionally, component of a complex that catalyzes the oxidation of glycolate to glyoxylate. Is required for E.coli to grow on glycolate as a sole source of carbon. Is also able to oxidize D-lactate ((R)-lactate) with a similar rate. Does not link directly to O(2), and 2,6-dichloroindophenol (DCIP) and phenazine methosulfate (PMS) can act as artificial electron acceptors in vitro, but the physiological molecule that functions as a primary electron acceptor during glycolate oxidation is unknown. The sequence is that of Glycolate oxidase subunit GlcE from Escherichia coli (strain K12).